The following is a 402-amino-acid chain: Chorismate synthase (402 aa).

Positions 40 and 46 each coordinate NADP(+). Residues 134–136, 255–256, glycine 299, 314–318, and arginine 340 each bind FMN; these read RAS, QA, and KPIAT.

The protein belongs to the chorismate synthase family. In terms of assembly, homotetramer. The cofactor is FMNH2.

The enzyme catalyses 5-O-(1-carboxyvinyl)-3-phosphoshikimate = chorismate + phosphate. It participates in metabolic intermediate biosynthesis; chorismate biosynthesis; chorismate from D-erythrose 4-phosphate and phosphoenolpyruvate: step 7/7. In terms of biological role, catalyzes the anti-1,4-elimination of the C-3 phosphate and the C-6 proR hydrogen from 5-enolpyruvylshikimate-3-phosphate (EPSP) to yield chorismate, which is the branch point compound that serves as the starting substrate for the three terminal pathways of aromatic amino acid biosynthesis. This reaction introduces a second double bond into the aromatic ring system. This is Chorismate synthase from Leifsonia xyli subsp. xyli (strain CTCB07).